The chain runs to 101 residues: Urease subunit beta (101 aa).

It belongs to the urease beta subunit family. Heterotrimer of UreA (gamma), UreB (beta) and UreC (alpha) subunits. Three heterotrimers associate to form the active enzyme.

The protein localises to the cytoplasm. The enzyme catalyses urea + 2 H2O + H(+) = hydrogencarbonate + 2 NH4(+). It participates in nitrogen metabolism; urea degradation; CO(2) and NH(3) from urea (urease route): step 1/1. The polypeptide is Urease subunit beta (Ruegeria pomeroyi (strain ATCC 700808 / DSM 15171 / DSS-3) (Silicibacter pomeroyi)).